The chain runs to 1522 residues: Lysophospholipase NTE1 (1522 aa).

Topologically, residues 1–73 (MVDGTYVNSS…SLLVYLINGT (73 aa)) are lumenal. The helical transmembrane segment at 74 to 94 (VPFYLVVLGSVFTPIIVYLIL) threads the bilayer. Topologically, residues 95–1522 (RSRVLSAYSR…IHLLHRRNSI (1428 aa)) are cytoplasmic. Disordered stretches follow at residues 443-468 (SVQE…TPNK), 485-523 (DLLS…ASSP), and 535-556 (SQNF…PSVV). 2 stretches are compositionally biased toward low complexity: residues 498–511 (KTAS…PRIS) and 540–555 (PLSS…KPSV). A nucleoside 3',5'-cyclic phosphate contacts are provided by residues 661–782 (PINV…LTKL) and 778–918 (TLTK…VAHK). Disordered regions lie at residues 828–852 (QKSK…DNQP) and 1125–1145 (SSQN…GAPP). Residues 1219-1383 (LVLGGGGARG…LDNLPVLEMK (165 aa)) enclose the PNPLA domain. A GXGXXG motif is present at residues 1223–1228 (GGGARG). The GXSXG motif lies at 1250–1254 (GTSIG). S1252 serves as the catalytic Nucleophile. D1370 (proton acceptor) is an active-site residue. Positions 1370 to 1372 (DGG) match the DGA/G motif.

This sequence belongs to the NTE family.

Its subcellular location is the endoplasmic reticulum membrane. It catalyses the reaction a 1-acyl-sn-glycero-3-phosphocholine + H2O = sn-glycerol 3-phosphocholine + a fatty acid + H(+). Its activity is regulated as follows. Inhibited by organophosphorus esters. Its function is as follows. Intracellular phospholipase B that catalyzes the double deacylation of phosphatidylcholine (PC) to glycerophosphocholine (GroPCho). Plays an important role in membrane lipid homeostasis. Responsible for the rapid PC turnover in response to inositol, elevated temperatures, or when choline is present in the growth medium. This is Lysophospholipase NTE1 (NTE1) from Eremothecium gossypii (strain ATCC 10895 / CBS 109.51 / FGSC 9923 / NRRL Y-1056) (Yeast).